The following is a 444-amino-acid chain: Putative methylesterase 15, chloroplastic (444 aa).

Polar residues predominate over residues 1 to 27 (MGNSLRCISQEQDPNQKKPSSVVNGNS). Disordered regions lie at residues 1 to 36 (MGNS…RRLS) and 48 to 91 (PSLS…DSLI). Residues 1-58 (MGNSLRCISQEQDPNQKKPSSVVNGNSSEKHVRRLSLIPSFRRRTLLPSLSCSGSSTS) constitute a chloroplast transit peptide. Residues 53 to 63 (SGSSTSSTSKK) are compositionally biased toward low complexity. Residues 64–80 (GGIKTKKKIRERHHQEQ) are compositionally biased toward basic residues. The span at 81-90 (HHHDHEKDSL) shows a compositional bias: basic and acidic residues. Residues 188–312 (FVLVHGGGFG…QPDSNYDLME (125 aa)) enclose the AB hydrolase-1 domain. Asp-262 acts as the Acyl-ester intermediate in catalysis. Catalysis depends on charge relay system residues Asp-390 and His-418.

It belongs to the AB hydrolase superfamily. Methylesterase family.

The protein resides in the plastid. It is found in the chloroplast. Functionally, putative methylesterase. The sequence is that of Putative methylesterase 15, chloroplastic from Arabidopsis thaliana (Mouse-ear cress).